A 1234-amino-acid chain; its full sequence is ATP-dependent helicase/nuclease subunit A (1234 aa).

The region spanning 2–475 (TQFTTSQQAA…IILAENFRST (474 aa)) is the UvrD-like helicase ATP-binding domain. Residue 23–30 (ASAGSGKT) coordinates ATP. The UvrD-like helicase C-terminal domain maps to 507-806 (YGALDYGDAH…KLMTIHKSKG (300 aa)).

Belongs to the helicase family. AddA subfamily. Heterodimer of AddA and AddB/RexB. Requires Mg(2+) as cofactor.

It catalyses the reaction Couples ATP hydrolysis with the unwinding of duplex DNA by translocating in the 3'-5' direction.. The enzyme catalyses ATP + H2O = ADP + phosphate + H(+). In terms of biological role, the heterodimer acts as both an ATP-dependent DNA helicase and an ATP-dependent, dual-direction single-stranded exonuclease. Recognizes the chi site generating a DNA molecule suitable for the initiation of homologous recombination. The AddA nuclease domain is required for chi fragment generation; this subunit has the helicase and 3' -&gt; 5' nuclease activities. The chain is ATP-dependent helicase/nuclease subunit A from Lacticaseibacillus casei (strain BL23) (Lactobacillus casei).